The following is a 325-amino-acid chain: NADH-quinone oxidoreductase subunit H (325 aa).

8 consecutive transmembrane segments (helical) span residues 11-31 (ILLTILKAVVILLVVVTCGAF), 81-101 (VIFTLAPMIAFTSLLLAFAIV), 114-134 (IGILFFLMMAGLAVYAVLFAG), 154-174 (LSYEVFLGLSLMGVVAQAGSF), 186-206 (VWNVIPQFFGFITFAIAGVAV), 237-257 (FFVGEYIGIVTISALMVTLFF), 265-285 (LPPFIWFALKTAFFMMMFILI), and 304-324 (ICLPLTLINLLVTAAVILWQA).

This sequence belongs to the complex I subunit 1 family. As to quaternary structure, NDH-1 is composed of 13 different subunits. Subunits NuoA, H, J, K, L, M, N constitute the membrane sector of the complex.

The protein resides in the cell inner membrane. It carries out the reaction a quinone + NADH + 5 H(+)(in) = a quinol + NAD(+) + 4 H(+)(out). NDH-1 shuttles electrons from NADH, via FMN and iron-sulfur (Fe-S) centers, to quinones in the respiratory chain. The immediate electron acceptor for the enzyme in this species is believed to be ubiquinone. Couples the redox reaction to proton translocation (for every two electrons transferred, four hydrogen ions are translocated across the cytoplasmic membrane), and thus conserves the redox energy in a proton gradient. This subunit may bind ubiquinone. The protein is NADH-quinone oxidoreductase subunit H of Shigella flexneri serotype 5b (strain 8401).